We begin with the raw amino-acid sequence, 364 residues long: Anionic peroxidase (364 aa).

An N-terminal signal peptide occupies residues 1-20 (MASFMKQLSLVLSFIALALA). Positions 21 to 66 (GCAVYQNTQTAMKDQLKVTPTWLDNTLKSTNLLSLGLGKPSGGKLG) are excised as a propeptide. The Proton acceptor role is filled by His-99. Positions 100, 103, 105, and 107 each coordinate Ca(2+). A disulfide bond links Cys-101 and Cys-106. N-linked (GlcNAc...) asparagine glycans are attached at residues Asn-113, Asn-188, Asn-202, and Asn-216. Disulfide bonds link Cys-155–Cys-343 and Cys-234–Cys-255. His-227 provides a ligand contact to heme b. Residue Thr-228 participates in Ca(2+) binding. Residues Asn-254 and Asn-260 are each glycosylated (N-linked (GlcNAc...) asparagine). Asp-268, Thr-270, and Asp-275 together coordinate Ca(2+). N-linked (GlcNAc...) asparagine glycosylation occurs at Asn-299.

Belongs to the peroxidase family. Classical plant (class III) peroxidase subfamily. Requires Ca(2+) as cofactor. Heme b is required as a cofactor. In terms of tissue distribution, highly expressed in suspension cultured cells and calli. Weak expression also found in the stems of intact plants. No expression in leaf, tuberous root and non-tuberous root.

Its subcellular location is the secreted. It carries out the reaction 2 a phenolic donor + H2O2 = 2 a phenolic radical donor + 2 H2O. Its function is as follows. Removal of H(2)O(2), oxidation of toxic reductants, biosynthesis and degradation of lignin, suberization, auxin catabolism, response to environmental stresses such as wounding, pathogen attack and oxidative stress. These functions might be dependent on each isozyme/isoform in each plant tissue. Functionally, may contribute to protection against cold-induced oxidative stress. This chain is Anionic peroxidase, found in Ipomoea batatas (Sweet potato).